A 61-amino-acid chain; its full sequence is uncharacterized protein (61 aa).

Over 1 to 20 (MSSTTSTINLSSLGSAINDV) the chain is Extracellular. A helical membrane pass occupies residues 21-41 (LNIIVQYLPVFVTVAVLFGII). Over 42 to 61 (TYMTGGLGGLFSGITGIFGS) the chain is Cytoplasmic.

The protein localises to the host membrane. This is an uncharacterized protein from Acidianus filamentous virus 2 (isolate Italy/Pozzuoli) (AFV-2).